The sequence spans 120 residues: Large ribosomal subunit protein eL18 (120 aa).

Belongs to the eukaryotic ribosomal protein eL18 family.

The polypeptide is Large ribosomal subunit protein eL18 (Thermococcus onnurineus (strain NA1)).